Here is a 381-residue protein sequence, read N- to C-terminus: RxLR effector protein 54 (381 aa).

The first 19 residues, 1–19, serve as a signal peptide directing secretion; it reads MRFQSIMMLTITCAGTCLA. A RxLR-dEER motif is present at residues 57-75; it reads RFLRFDTVARDTAGNDEER. 5 WY-domain regions span residues 97–150, 151–198, 199–247, 251–299, and 302–354; these read SAEE…ANNG, NQAF…SLSG, NWIR…WNKN, FFGD…LLTS, and SHKT…RDKI. Residues 372–381 carry the ATG8 interacting motif motif; it reads KPLDFDWEIV.

It belongs to the RxLR effector family. In terms of assembly, interacts via its C-terminal AIM with host ATG8CL.

The protein resides in the secreted. It localises to the host nucleus. Its subcellular location is the host cytoplasm. Functionally, effector that specifically binds host autophagy protein ATG8CL of the ATG8 family to stimulate autophagosome formation and subsequent autophagy rather than blocking autophagic flux. The pathogen remodels host-microbe interface by co-opting the host autophagy machinery which plays a key role in plant immunity. PexRD54 competes with the autophagy cargo receptor Joka2 to deplete it out of ATG8CL complexes and interferes with Joka2's positive effect on pathogen defense. This Phytophthora infestans (strain T30-4) (Potato late blight agent) protein is RxLR effector protein 54.